Here is a 315-residue protein sequence, read N- to C-terminus: Putative steroid dehydrogenase 2 (315 aa).

47–76 serves as a coordination point for NADP(+); that stretch reads ASWAVVTGATDGIGKSYSFELARRGFNVYI. The active site involves Tyr202.

It belongs to the short-chain dehydrogenases/reductases (SDR) family. 17-beta-HSD 3 subfamily.

The protein is Putative steroid dehydrogenase 2 (stdh-2) of Caenorhabditis elegans.